The chain runs to 78 residues: Large ribosomal subunit protein bL28 (78 aa).

This sequence belongs to the bacterial ribosomal protein bL28 family.

This chain is Large ribosomal subunit protein bL28, found in Ruthia magnifica subsp. Calyptogena magnifica.